The chain runs to 551 residues: RCC1 and BTB domain-containing protein 2 (551 aa).

6 RCC1 repeats span residues 64-115, 117-169, 171-222, 223-274, 276-326, and 328-382; these read NDEI…VLAT, DGEV…VLTS, GEVF…AVVD, TGEV…VLTD, GQIY…AAKT, and GGHV…TVAE. Residues 394–457 form the BTB domain; it reads ADLKFLVDGK…LYTDNISLSP (64 aa).

As to expression, expressed in testis and heart (at protein level).

The protein localises to the cytoplasmic vesicle. The protein resides in the secretory vesicle. It localises to the acrosome. The sequence is that of RCC1 and BTB domain-containing protein 2 (Rcbtb2) from Mus musculus (Mouse).